A 283-amino-acid polypeptide reads, in one-letter code: MGILLALLPAIAWGNILLVSVKMGGGAYSQTVGMTIGALFFATIMYVFTQPALTMTILIVGFISGLFWALGQVNQLKTVEKLGVSTTVTISTGMQLVATSIFGVIAFREWTTTTTIILGTIAILLIVVGVVFTSLDDKENAQPPGQLKKGLLTLIVSTFGYLVYVIIIRWYNIDGWSAILPQAVGMFVGAVVLTSKHKPFNKYAIRNALSGLLWGTGNLFLLLSLPRVGVATSFPLSQTGIVISTFGAIVFLGEKKTKRQLIFIALGSVLIIGGAVLLGMTKA.

The next 10 membrane-spanning stretches (helical) occupy residues 4 to 21 (LLAL…LVSV), 26 to 48 (GAYS…MYVF), 52 to 71 (ALTM…WALG), 84 to 106 (VSTT…GVIA), 110 to 132 (WTTT…GVVF), 151 to 173 (LLTL…WYNI), 178 to 195 (AILP…VLTS), 208 to 230 (ALSG…RVGV), 234 to 253 (FPLS…VFLG), and 260 to 279 (QLIF…VLLG).

Belongs to the GRP transporter (TC 2.A.7.5) family.

Its subcellular location is the cell membrane. The sequence is that of Putative sugar uptake protein BA_0200/GBAA_0200/BAS0200 from Bacillus anthracis.